The sequence spans 467 residues: Putative laccase-16 (467 aa).

Plastocyanin-like domains are found at residues 7-88, 98-225, and 318-451; these read VLGS…PKHG, KEIP…YTDS, and DFPN…KDGK. Positions 22, 24, 67, and 69 each coordinate Cu cation. Cu cation-binding residues include histidine 368, histidine 371, histidine 373, histidine 430, cysteine 431, histidine 432, histidine 436, and methionine 441.

The protein belongs to the multicopper oxidase family. Cu cation serves as cofactor.

It is found in the secreted. It localises to the extracellular space. Its subcellular location is the apoplast. The enzyme catalyses 4 hydroquinone + O2 = 4 benzosemiquinone + 2 H2O. In terms of biological role, lignin degradation and detoxification of lignin-derived products. This chain is Putative laccase-16 (LAC16), found in Oryza sativa subsp. japonica (Rice).